A 215-amino-acid polypeptide reads, in one-letter code: Putative serine/threonine-protein kinase YrzF (215 aa).

The region spanning 27–215 (SEELTLIGKG…HFAQRKRKYS (189 aa)) is the Protein kinase domain. ATP-binding positions include 33–41 (IGKGRSAYV) and K54. The Proton acceptor role is filled by D135.

It belongs to the protein kinase superfamily. Ser/Thr protein kinase family.

It catalyses the reaction L-seryl-[protein] + ATP = O-phospho-L-seryl-[protein] + ADP + H(+). The catalysed reaction is L-threonyl-[protein] + ATP = O-phospho-L-threonyl-[protein] + ADP + H(+). The protein is Putative serine/threonine-protein kinase YrzF (yrzF) of Bacillus subtilis (strain 168).